Consider the following 228-residue polypeptide: MQDLKQIITIKGTRDGLSLFIDEDASFEEVLKELEEKIQFSKPKQDEPVVSVKVKLGNRYISGEKEEQIRQVITTDQRFKVIGIDSNLIPINDAKRWMDDSEVKVINRVVRSGQILEIQGDLLLVGDVNPGGRVVASGNIYILGNLLGIAHAGYHGDKDAFIAASYMKPTQLRIADYISRAPDYESDGVYMECGIIDTDQDKITIDSLKVLSKKRKEISGFERRMNNG.

Belongs to the MinC family. In terms of assembly, interacts with MinD and FtsZ.

In terms of biological role, cell division inhibitor that blocks the formation of polar Z ring septums. Rapidly oscillates between the poles of the cell to destabilize FtsZ filaments that have formed before they mature into polar Z rings. Prevents FtsZ polymerization. This Oceanobacillus iheyensis (strain DSM 14371 / CIP 107618 / JCM 11309 / KCTC 3954 / HTE831) protein is Probable septum site-determining protein MinC.